The primary structure comprises 108 residues: MNRGFVTGVRIATKCANKSSNCGFKAASSNNIYNSFKATCTLNNNNNNSNIPSSSSSSPSFASFFSSTSTSATLNGSSNNKTVVPKSLENISSASQFNFSTFFIISDV.

Residues 48-73 (NSNIPSSSSSSPSFASFFSSTSTSAT) are compositionally biased toward low complexity. Residues 48-81 (NSNIPSSSSSSPSFASFFSSTSTSATLNGSSNNK) form a disordered region.

This is an uncharacterized protein from Dictyostelium discoideum (Social amoeba).